A 379-amino-acid polypeptide reads, in one-letter code: Cytochrome b (379 aa).

Transmembrane regions (helical) follow at residues 33–53 (FGSLLGMCLMIQILTGLFLAM), 77–98 (WLIRYLHANGASMFFICLFIHV), 113–133 (WNIGIILFLMTMATAFVGYVL), and 178–198 (FFAFHFILPFIIAAFALVHLL). Heme b contacts are provided by H83 and H97. Heme b is bound by residues H182 and H196. H201 is a binding site for a ubiquinone. 4 helical membrane-spanning segments follow: residues 226 to 246 (TKDLLGIFLLLLVLMILALFF), 288 to 308 (LGGVLALILSILILAAFPLLN), 320 to 340 (VTQVIYWIFTANLLVLTWIGG), and 347 to 367 (FTMIGQIASITYLAIIIILMP).

The protein belongs to the cytochrome b family. The cytochrome bc1 complex contains 11 subunits: 3 respiratory subunits (MT-CYB, CYC1 and UQCRFS1), 2 core proteins (UQCRC1 and UQCRC2) and 6 low-molecular weight proteins (UQCRH/QCR6, UQCRB/QCR7, UQCRQ/QCR8, UQCR10/QCR9, UQCR11/QCR10 and a cleavage product of UQCRFS1). This cytochrome bc1 complex then forms a dimer. It depends on heme b as a cofactor.

Its subcellular location is the mitochondrion inner membrane. Component of the ubiquinol-cytochrome c reductase complex (complex III or cytochrome b-c1 complex) that is part of the mitochondrial respiratory chain. The b-c1 complex mediates electron transfer from ubiquinol to cytochrome c. Contributes to the generation of a proton gradient across the mitochondrial membrane that is then used for ATP synthesis. This Akodon kofordi (Koford's grass mouse) protein is Cytochrome b (MT-CYB).